We begin with the raw amino-acid sequence, 272 residues long: Ribosomal RNA small subunit methyltransferase A (272 aa).

S-adenosyl-L-methionine is bound by residues N18, L20, G45, E66, D91, and N113.

The protein belongs to the class I-like SAM-binding methyltransferase superfamily. rRNA adenine N(6)-methyltransferase family. RsmA subfamily.

It localises to the cytoplasm. The catalysed reaction is adenosine(1518)/adenosine(1519) in 16S rRNA + 4 S-adenosyl-L-methionine = N(6)-dimethyladenosine(1518)/N(6)-dimethyladenosine(1519) in 16S rRNA + 4 S-adenosyl-L-homocysteine + 4 H(+). Functionally, specifically dimethylates two adjacent adenosines (A1518 and A1519) in the loop of a conserved hairpin near the 3'-end of 16S rRNA in the 30S particle. May play a critical role in biogenesis of 30S subunits. This Serratia proteamaculans (strain 568) protein is Ribosomal RNA small subunit methyltransferase A.